The following is a 1056-amino-acid chain: Contactin-5 (1056 aa).

The span at 1–14 (MKADSSSSSSMSSR) shows a compositional bias: low complexity. The interval 1-33 (MKADSSSSSSMSSRMRLRNSHGVGSSSQDWSPF) is disordered. Polar residues predominate over residues 22–31 (GVGSSSQDWS). Ig-like C2-type domains lie at 57–142 (PVFI…IVLS), 154–240 (PFSG…RVLS), 258–343 (PKIE…GHLQ), 348–432 (PQWI…AELK), 438–519 (PMFN…AELT), and 527–622 (PMRV…AELL). Intrachain disulfides connect C81-C131, C175-C227, and C280-C327. N-linked (GlcNAc...) asparagine glycans are attached at residues N96 and N119. N-linked (GlcNAc...) asparagine glycosylation occurs at N355. Disulfide bonds link C369/C416, C459/C507, and C549/C606. N489 and N496 each carry an N-linked (GlcNAc...) asparagine glycan. Fibronectin type-III domains lie at 629-727 (PPGV…TKEA), 732-829 (APAN…SAEG), 834-928 (PPSE…TKKN), and 933-1023 (PPGN…TSSG). The segment at 711–736 (GTGDPSPPSRAVRTKEAVPSVAPANV) is disordered. Residues N772, N887, N945, and N958 are each glycosylated (N-linked (GlcNAc...) asparagine). The GPI-anchor amidated asparagine moiety is linked to residue N1035. Positions 1036–1056 (SPPGLAWTALFLSLMVPSFPL) are cleaved as a propeptide — removed in mature form.

It belongs to the immunoglobulin superfamily. Contactin family.

It is found in the cell membrane. In terms of biological role, contactins mediate cell surface interactions during nervous system development. This chain is Contactin-5 (cntn5), found in Danio rerio (Zebrafish).